Reading from the N-terminus, the 259-residue chain is Ribosomal RNA small subunit methyltransferase J (259 aa).

S-adenosyl-L-methionine-binding positions include 101–102, 117–118, 153–154, and Asp176; these read RD, ER, and SS.

This sequence belongs to the methyltransferase superfamily. RsmJ family.

It localises to the cytoplasm. It catalyses the reaction guanosine(1516) in 16S rRNA + S-adenosyl-L-methionine = N(2)-methylguanosine(1516) in 16S rRNA + S-adenosyl-L-homocysteine + H(+). Functionally, specifically methylates the guanosine in position 1516 of 16S rRNA. This chain is Ribosomal RNA small subunit methyltransferase J, found in Vibrio vulnificus (strain CMCP6).